A 313-amino-acid polypeptide reads, in one-letter code: Ribonuclease Z (313 aa).

Zn(2+) contacts are provided by H62, H64, D66, H67, H142, D212, and H270. D66 functions as the Proton acceptor in the catalytic mechanism.

Belongs to the RNase Z family. Homodimer. Zn(2+) serves as cofactor.

The catalysed reaction is Endonucleolytic cleavage of RNA, removing extra 3' nucleotides from tRNA precursor, generating 3' termini of tRNAs. A 3'-hydroxy group is left at the tRNA terminus and a 5'-phosphoryl group is left at the trailer molecule.. Functionally, zinc phosphodiesterase, which displays some tRNA 3'-processing endonuclease activity. Probably involved in tRNA maturation, by removing a 3'-trailer from precursor tRNA. The protein is Ribonuclease Z of Cytophaga hutchinsonii (strain ATCC 33406 / DSM 1761 / CIP 103989 / NBRC 15051 / NCIMB 9469 / D465).